Consider the following 326-residue polypeptide: DnaJ homolog subfamily B member 6 (326 aa).

In terms of domain architecture, J spans 3 to 69 (DYYEVLGVQK…KKRDIYDRFG (67 aa)). The tract at residues 249–326 (ALPFQPTNTR…KKKKSTKGSY (78 aa)) is disordered. At Ser-277 the chain carries Phosphoserine.

In terms of assembly, homooligomer.

The protein localises to the cytoplasm. Its subcellular location is the perinuclear region. The protein resides in the nucleus. Functionally, has a stimulatory effect on the ATPase activity of HSP70 in a dose-dependent and time-dependent manner and hence acts as a co-chaperone of HSP70. Plays an indispensable role in the organization of KRT8/KRT18 filaments. Acts as an endogenous molecular chaperone for neuronal proteins including huntingtin. Suppresses aggregation and toxicity of polyglutamine-containing, aggregation-prone proteins. Also reduces cellular toxicity and caspase-3 activity. The chain is DnaJ homolog subfamily B member 6 from Gallus gallus (Chicken).